A 322-amino-acid polypeptide reads, in one-letter code: Olfactory receptor 11L1 (322 aa).

Residues 1–25 (MEPQNTSTVTNFQLLGFQNLLEWQA) lie on the Extracellular side of the membrane. N-linked (GlcNAc...) asparagine glycosylation occurs at asparagine 5. The helical transmembrane segment at 26–46 (LLFVIFLLIYCLTIIGNVVII) threads the bilayer. Topologically, residues 47–54 (TVVSQGLR) are cytoplasmic. The chain crosses the membrane as a helical span at residues 55 to 75 (LHSPMYMFLQHLSFLEVWYTS). Residues 76 to 99 (TTVPLLLANLLSWGQAISFSACMA) lie on the Extracellular side of the membrane. Cysteine 97 and cysteine 189 are oxidised to a cystine. The chain crosses the membrane as a helical span at residues 100 to 120 (QLYFFVFLGATECFLLAFMAY). Topologically, residues 121-139 (DRYLAICSPLRYPFLMHRG) are cytoplasmic. A helical membrane pass occupies residues 140-160 (LCARLVVVSWCTGVSTGFLPS). Residues 161–197 (LMISRLDFCGRNQINHFFCDLPPLMQLSCSRVYITEV) lie on the Extracellular side of the membrane. Residues 198 to 217 (TIFILSIAVLCICFFLTLGP) form a helical membrane-spanning segment. At 218–237 (YVFIVSSILRIPSTSGRRKT) the chain is on the cytoplasmic side. Residues 238 to 258 (FSTCGSHLAVVTLYYGTMISM) traverse the membrane as a helical segment. At 259-271 (YVCPSPHLLPEIN) the chain is on the extracellular side. Residues 272–292 (KIISVFYTVVTPLLNPVIYSL) traverse the membrane as a helical segment. At 293 to 322 (RNKDFKEAVRKVMRRKCGILWSTSKRKFLY) the chain is on the cytoplasmic side.

The protein belongs to the G-protein coupled receptor 1 family.

The protein localises to the cell membrane. In terms of biological role, odorant receptor. The protein is Olfactory receptor 11L1 (OR11L1) of Homo sapiens (Human).